Here is a 305-residue protein sequence, read N- to C-terminus: ATP synthase gamma chain (305 aa).

This sequence belongs to the ATPase gamma chain family. As to quaternary structure, F-type ATPases have 2 components, CF(1) - the catalytic core - and CF(0) - the membrane proton channel. CF(1) has five subunits: alpha(3), beta(3), gamma(1), delta(1), epsilon(1). CF(0) has three main subunits: a, b and c.

It localises to the cell membrane. Its function is as follows. Produces ATP from ADP in the presence of a proton gradient across the membrane. The gamma chain is believed to be important in regulating ATPase activity and the flow of protons through the CF(0) complex. The chain is ATP synthase gamma chain from Mycobacterium tuberculosis (strain ATCC 25177 / H37Ra).